A 275-amino-acid polypeptide reads, in one-letter code: Undecaprenyl-diphosphatase (275 aa).

8 consecutive transmembrane segments (helical) span residues 1 to 21 (MDWV…FLPI), 42 to 62 (VKDA…LVYY), 80 to 100 (TLWT…LAFG), 107 to 127 (LFKP…MWLI), 147 to 167 (SLLI…SRSA), 184 to 204 (TKFS…LNLV), 214 to 234 (IGLL…YLAI), and 249 to 269 (FAVY…TGVM).

This sequence belongs to the UppP family.

The protein resides in the cell membrane. The catalysed reaction is di-trans,octa-cis-undecaprenyl diphosphate + H2O = di-trans,octa-cis-undecaprenyl phosphate + phosphate + H(+). Its function is as follows. Catalyzes the dephosphorylation of undecaprenyl diphosphate (UPP). Confers resistance to bacitracin. This chain is Undecaprenyl-diphosphatase, found in Deinococcus deserti (strain DSM 17065 / CIP 109153 / LMG 22923 / VCD115).